The following is a 264-amino-acid chain: Thymidylate synthase (264 aa).

Arg-21 provides a ligand contact to dUMP. His-51 contributes to the (6R)-5,10-methylene-5,6,7,8-tetrahydrofolate binding site. Position 126-127 (126-127) interacts with dUMP; that stretch reads RR. The active-site Nucleophile is the Cys-146. DUMP contacts are provided by residues 166–169, Asn-177, and 207–209; these read RSAD and HIY. Asp-169 lines the (6R)-5,10-methylene-5,6,7,8-tetrahydrofolate pocket. Ala-263 lines the (6R)-5,10-methylene-5,6,7,8-tetrahydrofolate pocket.

Belongs to the thymidylate synthase family. Bacterial-type ThyA subfamily. Homodimer.

It is found in the cytoplasm. It catalyses the reaction dUMP + (6R)-5,10-methylene-5,6,7,8-tetrahydrofolate = 7,8-dihydrofolate + dTMP. Its pathway is pyrimidine metabolism; dTTP biosynthesis. Functionally, catalyzes the reductive methylation of 2'-deoxyuridine-5'-monophosphate (dUMP) to 2'-deoxythymidine-5'-monophosphate (dTMP) while utilizing 5,10-methylenetetrahydrofolate (mTHF) as the methyl donor and reductant in the reaction, yielding dihydrofolate (DHF) as a by-product. This enzymatic reaction provides an intracellular de novo source of dTMP, an essential precursor for DNA biosynthesis. This Methylobacillus flagellatus (strain ATCC 51484 / DSM 6875 / VKM B-1610 / KT) protein is Thymidylate synthase.